Reading from the N-terminus, the 100-residue chain is Enhancer of yellow 2 transcription factor (100 aa).

It belongs to the ENY2 family. Component of the nuclear pore complex (NPC)-associated AMEX complex (anchoring and mRNA export complex), composed of at least e(y)2 and xmas-2. Component of the SAGA transcription coactivator-HAT complexes, at least composed of Ada2b, e(y)2, Pcaf/Gcn5, Taf10 and Nipped-A/Trrap. Within the SAGA complex, e(y)2, Sgf11, and not/nonstop form an additional subcomplex of SAGA called the DUB module (deubiquitination module). Component of the THO complex, composed of at least e(y)2, HPR1, THO2, THOC5, THOC6 and THOC7. Interacts with e(y)1. Interacts with su(Hw) (via zinc fingers). Interacts with xmas-2; required for localization to the nuclear periphery. Interacts with the nuclear pore complex (NPC).

Its subcellular location is the nucleus. The protein localises to the nucleoplasm. It localises to the cytoplasm. Its function is as follows. Involved in mRNA export coupled transcription activation by association with both the AMEX and the SAGA complexes. The SAGA complex is a multiprotein complex that activates transcription by remodeling chromatin and mediating histone acetylation and deubiquitination. Within the SAGA complex, participates in a subcomplex that specifically deubiquitinates histone H2B. The SAGA complex is recruited to specific gene promoters by activators, where it is required for transcription. Required for nuclear receptor-mediated transactivation. Involved in transcription elongation by recruiting the THO complex onto nascent mRNA. The AMEX complex functions in docking export-competent ribonucleoprotein particles (mRNPs) to the nuclear entrance of the nuclear pore complex (nuclear basket). AMEX participates in mRNA export and accurate chromatin positioning in the nucleus by tethering genes to the nuclear periphery. The polypeptide is Enhancer of yellow 2 transcription factor (Drosophila pseudoobscura pseudoobscura (Fruit fly)).